Here is a 220-residue protein sequence, read N- to C-terminus: 3-dehydroquinate dehydratase (220 aa).

3-dehydroquinate is bound by residues 29-31 (EFR) and Arg56. The Proton donor/acceptor role is filled by His116. Lys142 acts as the Schiff-base intermediate with substrate in catalysis. Arg180, Ser200, and Gln204 together coordinate 3-dehydroquinate.

This sequence belongs to the type-I 3-dehydroquinase family. In terms of assembly, homodimer.

It carries out the reaction 3-dehydroquinate = 3-dehydroshikimate + H2O. The protein operates within metabolic intermediate biosynthesis; chorismate biosynthesis; chorismate from D-erythrose 4-phosphate and phosphoenolpyruvate: step 3/7. In terms of biological role, involved in the third step of the chorismate pathway, which leads to the biosynthesis of aromatic amino acids. Catalyzes the cis-dehydration of 3-dehydroquinate (DHQ) and introduces the first double bond of the aromatic ring to yield 3-dehydroshikimate. In Methanocaldococcus jannaschii (strain ATCC 43067 / DSM 2661 / JAL-1 / JCM 10045 / NBRC 100440) (Methanococcus jannaschii), this protein is 3-dehydroquinate dehydratase.